A 302-amino-acid chain; its full sequence is Zygote arrest protein 2.S (302 aa).

3 disordered regions span residues 15 to 46 (YGGN…SEPP), 88 to 117 (VDTG…PTDC), and 138 to 195 (LPQG…EPNK). Positions 159–178 (LKDRGPSPEEKEPETKEALE) are enriched in basic and acidic residues. The 3CxxC-type zinc finger occupies 203 to 288 (QKYGYFHCKD…QELCGRCKNK (86 aa)).

This sequence belongs to the ZAR1 family. As to expression, oocyte-specific.

It is found in the cytoplasm. The protein localises to the cytoplasmic ribonucleoprotein granule. In terms of biological role, mRNA-binding protein required for maternal mRNA storage, translation and degradation during oocyte maturation. Probably promotes formation of some phase-separated membraneless compartment that stores maternal mRNAs in oocytes: acts by undergoing liquid-liquid phase separation upon binding to maternal mRNAs. Binds to the 3'-UTR of maternal mRNAs, inhibiting their translation. This chain is Zygote arrest protein 2.S, found in Xenopus laevis (African clawed frog).